Here is a 192-residue protein sequence, read N- to C-terminus: Large ribosomal subunit protein bL25 (192 aa).

It belongs to the bacterial ribosomal protein bL25 family. CTC subfamily. As to quaternary structure, part of the 50S ribosomal subunit; part of the 5S rRNA/L5/L18/L25 subcomplex. Contacts the 5S rRNA. Binds to the 5S rRNA independently of L5 and L18.

Functionally, this is one of the proteins that binds to the 5S RNA in the ribosome where it forms part of the central protuberance. The polypeptide is Large ribosomal subunit protein bL25 (Marinomonas sp. (strain MWYL1)).